The sequence spans 88 residues: Apolipoprotein C-I (88 aa).

A signal peptide spans 1-26 (MRLLISLPVLIVVLAMALEGPAPAQA).

Belongs to the apolipoprotein C1 family.

The protein localises to the secreted. Functionally, inhibitor of lipoprotein binding to the low density lipoprotein (LDL) receptor, LDL receptor-related protein, and very low density lipoprotein (VLDL) receptor. Associates with high density lipoproteins (HDL) and the triacylglycerol-rich lipoproteins in the plasma and makes up about 10% of the protein of the VLDL and 2% of that of HDL. Appears to interfere directly with fatty acid uptake and is also the major plasma inhibitor of cholesteryl ester transfer protein (CETP). Modulates the interaction of APOE with beta-migrating VLDL and inhibits binding of beta-VLDL to the LDL receptor-related protein. Binds free fatty acids and reduces their intracellular esterification. The sequence is that of Apolipoprotein C-I (APOC1) from Mesocricetus auratus (Golden hamster).